The chain runs to 27 residues: U1-poneritoxin-Na3b (27 aa).

Belongs to the ponericin-G family. As to expression, expressed by the venom gland.

Its subcellular location is the secreted. In terms of biological role, shows a broad spectrum of activity against both Gram-positive and Gram-negative bacteria. Also has antimicrobial activity against S.cerevisiae. Has insecticidal and non-hemolytic activity. The chain is U1-poneritoxin-Na3b from Neoponera apicalis (Ant).